The chain runs to 289 residues: D-alanine aminotransferase (289 aa).

Y31 is a binding site for substrate. R50 is a binding site for pyridoxal 5'-phosphate. 2 residues coordinate substrate: R99 and H101. The residue at position 147 (K147) is an N6-(pyridoxal phosphate)lysine. E179 is a binding site for pyridoxal 5'-phosphate.

It belongs to the class-IV pyridoxal-phosphate-dependent aminotransferase family. Homodimer. Pyridoxal 5'-phosphate serves as cofactor.

The catalysed reaction is D-alanine + 2-oxoglutarate = D-glutamate + pyruvate. In terms of biological role, acts on the D-isomers of alanine, leucine, aspartate, glutamate, aminobutyrate, norvaline and asparagine. The enzyme transfers an amino group from a substrate D-amino acid to the pyridoxal phosphate cofactor to form pyridoxamine and an alpha-keto acid in the first half-reaction. The second half-reaction is the reverse of the first, transferring the amino group from the pyridoxamine to a second alpha-keto acid to form the product D-amino acid via a ping-pong mechanism. This is an important process in the formation of D-alanine and D-glutamate, which are essential bacterial cell wall components. The chain is D-alanine aminotransferase (dat) from Listeria monocytogenes serotype 1/2a (strain 10403S).